The primary structure comprises 683 residues: Receptor-like serine/threonine-protein kinase At2g45590 (683 aa).

The interval 1 to 21 (MPSRLSPPDIPPLQPTPTVSD) is disordered. The Extracellular segment spans residues 1–30 (MPSRLSPPDIPPLQPTPTVSDGHHRFQTLP). A helical membrane pass occupies residues 31-51 (LIIAGSLTLTGVLLILVTLLI). Residues 52 to 683 (YRRLYRNRTA…FPFKSRKKAR (632 aa)) lie on the Cytoplasmic side of the membrane. The 573-residue stretch at 92-664 (FSESTHLGHG…GVSEPPHLPF (573 aa)) folds into the Protein kinase domain. Residues 98 to 106 (LGHGGFGSV) and Lys121 contribute to the ATP site. The active-site Proton acceptor is the Asp223. Residues 406-436 (ERPSNNKEWINNGDGSSSVSKKKKKEKKRKP) are disordered. Polar residues predominate over residues 411–424 (NKEWINNGDGSSSV). Basic residues predominate over residues 425–436 (SKKKKKEKKRKP).

It belongs to the protein kinase superfamily. Ser/Thr protein kinase family.

It localises to the cell membrane. The enzyme catalyses L-seryl-[protein] + ATP = O-phospho-L-seryl-[protein] + ADP + H(+). It carries out the reaction L-threonyl-[protein] + ATP = O-phospho-L-threonyl-[protein] + ADP + H(+). This is Receptor-like serine/threonine-protein kinase At2g45590 from Arabidopsis thaliana (Mouse-ear cress).